The primary structure comprises 35 residues: Photosystem II reaction center protein T (35 aa).

A helical membrane pass occupies residues A3 to F23.

It belongs to the PsbT family. In terms of assembly, PSII is composed of 1 copy each of membrane proteins PsbA, PsbB, PsbC, PsbD, PsbE, PsbF, PsbH, PsbI, PsbJ, PsbK, PsbL, PsbM, PsbT, PsbY, PsbZ, Psb30/Ycf12, at least 3 peripheral proteins of the oxygen-evolving complex and a large number of cofactors. It forms dimeric complexes.

The protein resides in the plastid. It localises to the chloroplast thylakoid membrane. In terms of biological role, found at the monomer-monomer interface of the photosystem II (PS II) dimer, plays a role in assembly and dimerization of PSII. PSII is a light-driven water plastoquinone oxidoreductase, using light energy to abstract electrons from H(2)O, generating a proton gradient subsequently used for ATP formation. This Staurastrum punctulatum (Green alga) protein is Photosystem II reaction center protein T.